Consider the following 147-residue polypeptide: Small ribosomal subunit protein bS6m (147 aa).

It belongs to the bacterial ribosomal protein bS6 family. As to quaternary structure, component of the mitochondrial ribosome small subunit (28S) which comprises a 12S rRNA and about 30 distinct proteins.

It localises to the mitochondrion. The sequence is that of Small ribosomal subunit protein bS6m (mRpS6) from Drosophila melanogaster (Fruit fly).